A 401-amino-acid polypeptide reads, in one-letter code: Chromate transport protein (401 aa).

The next 12 membrane-spanning stretches (helical) occupy residues 26–46 (LVMY…ALAG), 67–87 (GLAL…IYLG), 93–113 (IVGA…MVLA), 124–144 (LTWM…IIAI), 172–192 (VITE…VWFW), 214–234 (AASG…GVFF), 237–257 (AGAF…GGVV), 272–294 (VAVA…YLVA), 299–321 (ACVA…APYF), 330–350 (ILAF…GAVI), 356–376 (SIVD…LLKF), and 379–399 (LSEP…YPLL).

The protein belongs to the chromate ion transporter (CHR) (TC 2.A.51) family.

The protein localises to the cell inner membrane. In terms of biological role, this protein reduces chromate accumulation and is essential for chromate resistance. In Cupriavidus metallidurans (strain ATCC 43123 / DSM 2839 / NBRC 102507 / CH34) (Ralstonia metallidurans), this protein is Chromate transport protein.